Consider the following 493-residue polypeptide: Glutamyl-tRNA(Gln) amidotransferase subunit A (493 aa).

Active-site charge relay system residues include K78 and S158. S182 serves as the catalytic Acyl-ester intermediate.

This sequence belongs to the amidase family. GatA subfamily. Heterotrimer of A, B and C subunits.

It catalyses the reaction L-glutamyl-tRNA(Gln) + L-glutamine + ATP + H2O = L-glutaminyl-tRNA(Gln) + L-glutamate + ADP + phosphate + H(+). Its function is as follows. Allows the formation of correctly charged Gln-tRNA(Gln) through the transamidation of misacylated Glu-tRNA(Gln) in organisms which lack glutaminyl-tRNA synthetase. The reaction takes place in the presence of glutamine and ATP through an activated gamma-phospho-Glu-tRNA(Gln). The sequence is that of Glutamyl-tRNA(Gln) amidotransferase subunit A from Methylocella silvestris (strain DSM 15510 / CIP 108128 / LMG 27833 / NCIMB 13906 / BL2).